Here is a 107-residue protein sequence, read N- to C-terminus: MAIVDVVVIPVGTDGPSVSKYIAEIQTKLKEYKAQGKIDYQLTPMNTLIEGDLKDLFEVVQAIHELPFDKGLSRVCTNIRIDDRRDKSRNMNEKVKAVEKYLNDGGN.

The protein belongs to the UPF0045 family.

This Staphylococcus xylosus protein is UPF0045 protein in glkA 3'region (dglA).